Reading from the N-terminus, the 1683-residue chain is Phospholipase D1 (1683 aa).

4 disordered regions span residues 1–150, 173–198, 259–289, and 384–416; these read MSNV…AYTQ, LKSS…QQVN, ILDI…SIPR, and VMEK…NITS. At Ser-2 the chain carries N-acetylserine. A phosphoserine mark is found at Ser-8 and Ser-30. 3 stretches are compositionally biased toward basic and acidic residues: residues 20–34, 63–82, and 90–112; these read SVTE…RPDE, NGKE…DRNL, and SLDH…ENMH. The segment covering 116-125 has biased composition (low complexity); it reads NNLHSSNNNV. Residues 141–150 show a composition bias toward polar residues; the sequence is RRSSSVAYTQ. Ser-145 is modified (phosphoserine). Residues 263 to 279 are compositionally biased toward low complexity; that stretch reads TNSNHNHRGNNNNNTGE. One can recognise a PX domain in the interval 291-487; sequence SSIISISSNV…EFYELSPLGN (197 aa). A compositionally biased stretch (polar residues) spans 392–404; the sequence is KPSSAASAPHTSE. A compositionally biased stretch (low complexity) spans 405-416; that stretch reads NNNNDNGSNITS. Residues 496-664 enclose the PH domain; sequence QGKQGYLVIR…SSIIKMSTST (169 aa). PLD phosphodiesterase domains are found at residues 791-818 and 1091-1118; these read YFWA…CYGR and EQLY…NERS. Active-site residues include His-796, Lys-798, Asp-803, His-1096, Lys-1098, and Asp-1103. Residues 1430 to 1465 are disordered; it reads KDMRRHLSSSTESTRNGSNSLPLNEKSNEGESTNVD. A compositionally biased stretch (polar residues) spans 1437 to 1451; sequence SSSTESTRNGSNSLP. Position 1461 is a phosphoserine (Ser-1461). At Thr-1462 the chain carries Phosphothreonine.

Belongs to the phospholipase D family. In terms of assembly, interacts with SRF1.

The catalysed reaction is a 1,2-diacyl-sn-glycero-3-phosphocholine + H2O = a 1,2-diacyl-sn-glycero-3-phosphate + choline + H(+). Activity is dependent of phosphatidylinositol 4,5-bisphosphate and the regulator SRF1. Inhibited by magnesium. Required for meiosis and spore formation. Seems to be involved in the coordinate induction of late meiotic events. PLD activity is induced under sporulation conditions and seems to be necessary to complete the meiotic cycle, but not for vegetative cell growth. This is Phospholipase D1 (SPO14) from Saccharomyces cerevisiae (strain ATCC 204508 / S288c) (Baker's yeast).